Here is a 741-residue protein sequence, read N- to C-terminus: Transketolase-1, chloroplastic (741 aa).

The N-terminal 66 residues, 1–66 (MASTSSLALS…NRSLRPLVRA (66 aa)), are a transit peptide targeting the chloroplast. Residues 22–51 (GSDQRGSLPAFSGLKSTGSRASASSRRRIA) form a disordered region. Ala-67 carries the N-acetylalanine modification. His-103 contacts substrate. Thiamine diphosphate is bound by residues His-143 and 192 to 194 (GPL). Position 233 (Asp-233) interacts with Mg(2+). 2 residues coordinate thiamine diphosphate: Gly-234 and Asn-263. Positions 263 and 265 each coordinate Mg(2+). His-340 contacts substrate. A thiamine diphosphate-binding site is contributed by His-340. Residue Ser-428 is modified to Phosphoserine. Residues Arg-434 and Ser-461 each coordinate substrate. Thiamine diphosphate is bound by residues Glu-488 and Phe-515. The Proton donor role is filled by Glu-488. Substrate-binding residues include His-539, Asp-547, and Arg-598.

It belongs to the transketolase family. In terms of assembly, homodimer. Mg(2+) serves as cofactor. It depends on Ca(2+) as a cofactor. Requires Mn(2+) as cofactor. The cofactor is Co(2+). Thiamine diphosphate is required as a cofactor.

Its subcellular location is the plastid. The protein localises to the chloroplast stroma. The enzyme catalyses D-sedoheptulose 7-phosphate + D-glyceraldehyde 3-phosphate = aldehydo-D-ribose 5-phosphate + D-xylulose 5-phosphate. The protein operates within carbohydrate biosynthesis; Calvin cycle. Catalyzes the reversible transfer of a two-carbon ketol group from fructose-6-phosphate or sedoheptulose-7-phosphate to glyceraldehyde-3-phosphate to yield xylulose-5-phosphate and erythrose-4-phosphate or ribose-5-phosphate, respectively. Could act as a stress sensor involved in adaptation process. This is Transketolase-1, chloroplastic (TKL-1) from Arabidopsis thaliana (Mouse-ear cress).